Reading from the N-terminus, the 199-residue chain is dITP/XTP pyrophosphatase (199 aa).

Position 8 to 13 (8 to 13) interacts with substrate; the sequence is THNRNK. The Proton acceptor role is filled by aspartate 68. Aspartate 68 provides a ligand contact to Mg(2+). Substrate contacts are provided by residues serine 69, 151-154, lysine 174, and 179-180; these read HGYD and HR.

Belongs to the HAM1 NTPase family. As to quaternary structure, homodimer. Requires Mg(2+) as cofactor.

The catalysed reaction is XTP + H2O = XMP + diphosphate + H(+). It carries out the reaction dITP + H2O = dIMP + diphosphate + H(+). It catalyses the reaction ITP + H2O = IMP + diphosphate + H(+). Pyrophosphatase that catalyzes the hydrolysis of nucleoside triphosphates to their monophosphate derivatives, with a high preference for the non-canonical purine nucleotides XTP (xanthosine triphosphate), dITP (deoxyinosine triphosphate) and ITP. Seems to function as a house-cleaning enzyme that removes non-canonical purine nucleotides from the nucleotide pool, thus preventing their incorporation into DNA/RNA and avoiding chromosomal lesions. This Leifsonia xyli subsp. xyli (strain CTCB07) protein is dITP/XTP pyrophosphatase.